Consider the following 62-residue polypeptide: Venom peptide 6 (62 aa).

The N-terminal stretch at 1–26 (MKSTSVFILFAGIAIMACLQMTGTEA) is a signal peptide. AXPX repeat units lie at residues 26–29 (AAPS), 30–33 (ASPN), and 40–43 (ADPD). A propeptide spanning residues 27-46 (APSASPNPTPVARADPDPEA) is cleaved from the precursor.

It belongs to the MCD family. As to expression, expressed by the venom gland.

It localises to the secreted. Its subcellular location is the target cell membrane. Antimicrobial peptide with strong activity against the fungus B.cinerea (MIC=5 uM) and the Gram-positive bacterium S.aureus (MIC=50 uM), and no activity against C.albicans (MIC&gt;200 uM), and the Gram-negative bacterium E.coli (MIC&gt;200 uM). Shows cytolytic activity against insect cell lines. Has no hemolytic activity against human erythrocytes. In vivo, peptide injection in the vicinity of the head and thorax of lepidopteran larvae induces feeding disorder that lasts one or two days before recovering. The chain is Venom peptide 6 from Eumenes pomiformis (Potter wasp).